Here is a 369-residue protein sequence, read N- to C-terminus: Deoxyhypusine synthase (369 aa).

NAD(+) contacts are provided by residues 105-109, 131-133, E137, and D238; these read SNLIS and TAG. 136–137 provides a ligand contact to spermidine; the sequence is EE. Residue D243 coordinates spermidine. Residue G283 participates in NAD(+) binding. Residue H288 coordinates spermidine. 308–309 provides a ligand contact to NAD(+); that stretch reads TA. Spermidine is bound by residues 314–316 and 323–329; these read GSD and EAVSWGK. The active-site Nucleophile is K329. NAD(+) is bound at residue 342 to 343; that stretch reads DA.

It belongs to the deoxyhypusine synthase family. NAD(+) serves as cofactor.

The enzyme catalyses [eIF5A protein]-L-lysine + spermidine = [eIF5A protein]-deoxyhypusine + propane-1,3-diamine. Its pathway is protein modification; eIF5A hypusination. Functionally, catalyzes the NAD-dependent oxidative cleavage of spermidine and the subsequent transfer of the butylamine moiety of spermidine to the epsilon-amino group of a critical lysine residue of the eIF-5A precursor protein to form the intermediate deoxyhypusine residue. This is the first step of the post-translational modification of that lysine into an unusual amino acid residue named hypusine. Hypusination is unique to mature eIF-5A factor and is essential for its function. This chain is Deoxyhypusine synthase (Dhps), found in Mus musculus (Mouse).